Reading from the N-terminus, the 1004-residue chain is 2-oxoglutarate dehydrogenase E1 component (1004 aa).

It belongs to the alpha-ketoglutarate dehydrogenase family. Homodimer. Part of the 2-oxoglutarate dehydrogenase (OGDH) complex composed of E1 (2-oxoglutarate dehydrogenase), E2 (dihydrolipoamide succinyltransferase) and E3 (dihydrolipoamide dehydrogenase); the complex contains multiple copies of the three enzymatic components (E1, E2 and E3). Thiamine diphosphate is required as a cofactor.

It carries out the reaction N(6)-[(R)-lipoyl]-L-lysyl-[protein] + 2-oxoglutarate + H(+) = N(6)-[(R)-S(8)-succinyldihydrolipoyl]-L-lysyl-[protein] + CO2. Its function is as follows. E1 component of the 2-oxoglutarate dehydrogenase (OGDH) complex which catalyzes the decarboxylation of 2-oxoglutarate, the first step in the conversion of 2-oxoglutarate to succinyl-CoA and CO(2). This Brucella melitensis biotype 2 (strain ATCC 23457) protein is 2-oxoglutarate dehydrogenase E1 component.